A 214-amino-acid polypeptide reads, in one-letter code: MELAAGSFSEEQFWEACAELQQPALAGADWQLLVETSGISIYRLLDKKTGLYEYKVFGVLEDCSPTLLADIYMDSDYRKQWDQYVKELYEQECNGETVVYWEVKYPFPMSNRDYVYLRQRRDLDMEGRKIHVILARSTSMPQLGERSGVIRVKQYKQSLAIESDGKKGSKVFMYYFDNPGGQIPSWLINWAAKNGVPNFLKDMARACQNYLKKT.

M1 bears the N-acetylmethionine mark. One can recognise an START domain in the interval 1–212 (MELAAGSFSE…MARACQNYLK (212 aa)). Residues Y72 and R78 each coordinate a 1,2-diacyl-sn-glycero-3-phosphocholine. S139 carries the phosphoserine modification. Q157 serves as a coordination point for a 1,2-diacyl-sn-glycero-3-phosphocholine.

Interacts with ACOT13/THEM2. In terms of tissue distribution, highest expression in liver, placenta, testis, kidney and heart. Low levels in brain and lung. No expression detected in thymus.

Its subcellular location is the cytoplasm. Its function is as follows. Catalyzes the transfer of phosphatidylcholine between membranes. Binds a single lipid molecule. The sequence is that of Phosphatidylcholine transfer protein (PCTP) from Homo sapiens (Human).